We begin with the raw amino-acid sequence, 378 residues long: Fructose-1,6-bisphosphatase class 1 2 (378 aa).

The Mg(2+) site is built by Glu98, Asp120, Leu122, and Asp123. Residues 123-126 and Asn227 contribute to the substrate site; that span reads DGSS. Glu299 contacts Mg(2+).

This sequence belongs to the FBPase class 1 family. In terms of assembly, homotetramer. The cofactor is Mg(2+).

It localises to the cytoplasm. The catalysed reaction is beta-D-fructose 1,6-bisphosphate + H2O = beta-D-fructose 6-phosphate + phosphate. Its pathway is carbohydrate biosynthesis; gluconeogenesis. The chain is Fructose-1,6-bisphosphatase class 1 2 from Paraburkholderia xenovorans (strain LB400).